Reading from the N-terminus, the 484-residue chain is MGHVLGGTLLAANRLARPPAVVLGKPRVCCWRASPWPVIVSSALQFSSSSARHTNYTSARYEARGRSTTQRKVDDRPWHRESSGSLPKSTSPDPTGGDATKGRLLTTPTRLLKLILPIPFHPEQEYINSDETKTNKPKEDAVEPLALLVHPQQPLSYLERLIQAEIPPLLVKDREKLPEIIFRAEADYTGGNKSNDGRREESNGNGSNVASYSGLGREGPSKGDTHWVRWSGSTEIGDFIRDAARGREFSVTIEGHAEELRVAVPSFKDRTYYMRMRLRRMSQEIDQMATVKRECDLLAHKGAHALAKGGFAALAAWWGIVYYVTFHTDMGWDLVEPITYLAGLASIMGGYLWFLFISRDLSYKAAMNVTVSRRQNALYQERGFDPAKWDQLVHDANGLRREIKFAATEYGVEWDEMKDLGGEEVKEVLEEEKGGKARKREQEDEDGDGDDDHDHDHDHVSHGAELQGQDILHANEAAANVPGD.

The N-terminal 33 residues, 1-33, are a transit peptide targeting the mitochondrion; it reads MGHVLGGTLLAANRLARPPAVVLGKPRVCCWRA. At 34–304 the chain is on the mitochondrial matrix side; that stretch reads SPWPVIVSSA…CDLLAHKGAH (271 aa). Disordered regions lie at residues 59–104 and 188–227; these read ARYE…KGRL and YTGG…DTHW. Residues 61–82 show a composition bias toward basic and acidic residues; that stretch reads YEARGRSTTQRKVDDRPWHRES. The segment covering 83–93 has biased composition (polar residues); it reads SGSLPKSTSPD. A helical transmembrane segment spans residues 305 to 326; sequence ALAKGGFAALAAWWGIVYYVTF. At 327–334 the chain is on the mitochondrial intermembrane side; it reads HTDMGWDL. The Selectivity filter signature appears at 332–340; the sequence is WDLVEPITY. The chain crosses the membrane as a helical span at residues 335-355; sequence VEPITYLAGLASIMGGYLWFL. Glu-336 lines the Ca(2+) pocket. Residues 356-484 lie on the Mitochondrial matrix side of the membrane; sequence FISRDLSYKA…NEAAANVPGD (129 aa). 2 stretches are compositionally biased toward basic and acidic residues: residues 426–435 and 452–462; these read KEVLEEEKGG and DHDHDHDHVSH. The tract at residues 426-484 is disordered; that stretch reads KEVLEEEKGGKARKREQEDEDGDGDDDHDHDHDHVSHGAELQGQDILHANEAAANVPGD.

It belongs to the MCU (TC 1.A.77) family. In terms of assembly, homotetramer, assembles in a dimer or dimers configuration with two interfaces.

The protein localises to the mitochondrion inner membrane. It catalyses the reaction Ca(2+)(in) = Ca(2+)(out). Its activity is regulated as follows. Inhibited by ruthenium red or its derivative Ru360. In terms of biological role, highly selective calcium channel localized to the inner mitochondrial membrane, which mediates calcium uptake into the mitochondrial matrix. Mitochondrial calcium homeostasis plays key roles in cellular physiology and regulates ATP production, cytoplasmic calcium signals and activation of cell death pathways. Sufficient to operate as a pore-forming channel without the need of calcium-sensor or auxiliary subunit. The protein is Calcium uniporter protein, mitochondrial of Metarhizium acridum (strain CQMa 102).